Consider the following 466-residue polypeptide: Delta-1 crystallin (466 aa).

A Blocked amino end (Ala) modification is found at A2.

The protein belongs to the lyase 1 family. Argininosuccinate lyase subfamily. Homotetramer. The N-terminus is blocked. Eye lens.

In terms of biological role, delta crystallin, the principal crystallin in embryonic lens, is found only in birds and reptiles. The polypeptide is Delta-1 crystallin (ASL1) (Gallus gallus (Chicken)).